A 73-amino-acid polypeptide reads, in one-letter code: Protein SlyX homolog (73 aa).

The protein belongs to the SlyX family.

The polypeptide is Protein SlyX homolog (Haemophilus influenzae (strain PittEE)).